Reading from the N-terminus, the 311-residue chain is Olfactory receptor 1D4 (311 aa).

The Extracellular portion of the chain corresponds to 1–25; that stretch reads MDGDNQSENSQFLLLGISESPEQQQ. The N-linked (GlcNAc...) asparagine glycan is linked to N5. Residues 26 to 49 traverse the membrane as a helical segment; the sequence is ILFWMFLSMYLVTVLGNVLIILAI. Topologically, residues 50 to 57 are cytoplasmic; it reads SSDSHLHT. Residues 58–79 form a helical membrane-spanning segment; the sequence is PMYFFLANLSFTDLFFVTNTIP. Over 80–100 the chain is Extracellular; that stretch reads KMLVNFQSQNKAISYAGCLTQ. The cysteines at positions 97 and 189 are disulfide-linked. A helical membrane pass occupies residues 101-120; it reads LYFLVSLVTLDNLILAVMAY. Residues 121-140 are Cytoplasmic-facing; it reads DRYVAICCPLHYVTAMSPGL. The helical transmembrane segment at 141–158 threads the bilayer; that stretch reads CVLLLSLCWGLSVLYGLL. At 159 to 196 the chain is on the extracellular side; that stretch reads LTFLLTRVTFCGPREIHYLFCDMYILLWLACSNTHIIH. A helical transmembrane segment spans residues 197-220; sequence TALIATGCFIFLTLLGFMTTSYVR. Residues 221–237 are Cytoplasmic-facing; it reads IVRTILQMPSASKKYKT. A helical transmembrane segment spans residues 238–260; it reads FSTCASHLGVVSLFYGTLAMVYL. Over 261 to 271 the chain is Extracellular; it reads QPLHTYSMKDS. Residues 272 to 291 traverse the membrane as a helical segment; that stretch reads VATVMYAVLTPMMNPFIYSL. The Cytoplasmic portion of the chain corresponds to 292–311; it reads RNKDMHGAPGRVLWRPFQRP.

The protein belongs to the G-protein coupled receptor 1 family.

The protein resides in the cell membrane. In terms of biological role, odorant receptor. The protein is Olfactory receptor 1D4 (OR1D4) of Homo sapiens (Human).